The sequence spans 194 residues: dITP/XTP pyrophosphatase (194 aa).

A substrate-binding site is contributed by 8–13 (TSNPGK). Residues Glu-38 and Asp-67 each coordinate Mg(2+). Asp-67 functions as the Proton acceptor in the catalytic mechanism. Substrate-binding positions include Ser-68, 152–155 (FGYD), Lys-175, and 180–181 (HR).

It belongs to the HAM1 NTPase family. As to quaternary structure, homodimer. Requires Mg(2+) as cofactor.

The catalysed reaction is XTP + H2O = XMP + diphosphate + H(+). It catalyses the reaction dITP + H2O = dIMP + diphosphate + H(+). The enzyme catalyses ITP + H2O = IMP + diphosphate + H(+). Functionally, pyrophosphatase that catalyzes the hydrolysis of nucleoside triphosphates to their monophosphate derivatives, with a high preference for the non-canonical purine nucleotides XTP (xanthosine triphosphate), dITP (deoxyinosine triphosphate) and ITP. Seems to function as a house-cleaning enzyme that removes non-canonical purine nucleotides from the nucleotide pool, thus preventing their incorporation into DNA/RNA and avoiding chromosomal lesions. The chain is dITP/XTP pyrophosphatase from Legionella pneumophila (strain Lens).